The sequence spans 592 residues: Sodium- and chloride-dependent transporter XTRP3 (592 aa).

Residues 1-5 lie on the Cytoplasmic side of the membrane; it reads MEKAR. Residues 6 to 26 traverse the membrane as a helical segment; the sequence is PLWANSLQFVFACISYAVGLG. Residues 27–42 lie on the Extracellular side of the membrane; that stretch reads NVWRFPYLCQMYGGGS. The helical transmembrane segment at 43–63 threads the bilayer; sequence FLVPYIIMLIVEGMPLLYLEL. Residues 64–79 lie on the Cytoplasmic side of the membrane; that stretch reads AVGQRMRQGSIGAWRT. Residues 80–100 form a helical membrane-spanning segment; it reads ISPYLSGVGVASVVVSFFLSM. Residues 101-165 are Extracellular-facing; it reads YYNVINAWAF…ISPSLQENGG (65 aa). Residue Asn-131 is glycosylated (N-linked (GlcNAc...) asparagine). The helical transmembrane segment at 166-186 threads the bilayer; that stretch reads VQWEPALCLLLAWLVVYLCIL. Over 187–194 the chain is Cytoplasmic; it reads RGTESTGK. The chain crosses the membrane as a helical span at residues 195-215; it reads VVYFTASLPYCVLIIYLIRGL. The Extracellular segment spans residues 216-241; that stretch reads TLHGATNGLMYMFTPKIEQLANPKAW. Residues 242–262 traverse the membrane as a helical segment; it reads INAATQIFFSLGLGFGSLIAF. The Cytoplasmic segment spans residues 263–276; that stretch reads ASYNEPSNNCQKHA. Residues 277–297 form a helical membrane-spanning segment; it reads IIVSLINSFTSIFASIVTFSI. At 298 to 389 the chain is on the extracellular side; it reads YGFKATFNYE…EAIKNMEVSQ (92 aa). Asn-357 carries an N-linked (GlcNAc...) asparagine glycan. Residues 390–410 traverse the membrane as a helical segment; it reads LWSVLYFFMLLMLGIGSMLGN. Over 411 to 431 the chain is Cytoplasmic; that stretch reads TAAILTPLTDSKIISSHLPKE. The chain crosses the membrane as a helical span at residues 432–452; the sequence is AISGLVCLVNCAIGMVFTMEA. The Extracellular segment spans residues 453–465; the sequence is GNYWFDIFNDYAA. Residues 466-486 form a helical membrane-spanning segment; the sequence is TLSLLLIVLVETIAVCYVYGL. Residues 487–504 lie on the Cytoplasmic side of the membrane; that stretch reads RRFESDLKAMTGRAVSWY. The chain crosses the membrane as a helical span at residues 505–525; it reads WKVMWAGVSPLLIVSLFVFYL. Residues 526–554 lie on the Extracellular side of the membrane; sequence SDYILTGTLKYQAWDASQGQLVTKDYPAY. A helical membrane pass occupies residues 555 to 575; that stretch reads ALAVIGLLVASSTMCIPLAAL. Over 576–592 the chain is Cytoplasmic; sequence GTFVQRRLKRGDADPVA.

Belongs to the sodium:neurotransmitter symporter (SNF) (TC 2.A.22) family. SLC6A20 subfamily. Kidney and small intestine. Expressed in the S3 segment of the proximal tubule. Expressed in neurons.

The protein localises to the apical cell membrane. The catalysed reaction is L-proline(out) + chloride(out) + 2 Na(+)(out) = L-proline(in) + chloride(in) + 2 Na(+)(in). It catalyses the reaction L-pipecolate(out) + chloride(out) + 2 Na(+)(out) = L-pipecolate(in) + chloride(in) + 2 Na(+)(in). The enzyme catalyses sarcosine(out) + chloride(out) + 2 Na(+)(out) = sarcosine(in) + chloride(in) + 2 Na(+)(in). It carries out the reaction N-methyl-L-proline(out) + chloride(out) + 2 Na(+)(out) = N-methyl-L-proline(in) + chloride(in) + 2 Na(+)(in). The catalysed reaction is 2-methyl-2-(methylamino)propanoate(out) + chloride(out) + 2 Na(+)(out) = 2-methyl-2-(methylamino)propanoate(in) + chloride(in) + 2 Na(+)(in). It catalyses the reaction glycine betaine(out) + chloride(out) + 2 Na(+)(out) = glycine betaine(in) + chloride(in) + 2 Na(+)(in). The enzyme catalyses glycine(out) + chloride(out) + 2 Na(+)(out) = glycine(in) + chloride(in) + 2 Na(+)(in). Functionally, mediates the Na(+)- and Cl(-)-dependent uptake of imino acids such as L-proline, N-methyl-L-proline and pipecolate as well as N-methylated amino acids. Also transports glycine, regulates proline and glycine homeostasis in the brain playing a role in the modulation of NMDAR currents. This is Sodium- and chloride-dependent transporter XTRP3 from Homo sapiens (Human).